The chain runs to 172 residues: 3-hydroxydecanoyl-[acyl-carrier-protein] dehydratase (172 aa).

H71 is a catalytic residue.

The protein belongs to the thioester dehydratase family. FabA subfamily. Homodimer.

The protein resides in the cytoplasm. The enzyme catalyses a (3R)-hydroxyacyl-[ACP] = a (2E)-enoyl-[ACP] + H2O. It catalyses the reaction (3R)-hydroxydecanoyl-[ACP] = (2E)-decenoyl-[ACP] + H2O. The catalysed reaction is (2E)-decenoyl-[ACP] = (3Z)-decenoyl-[ACP]. It participates in lipid metabolism; fatty acid biosynthesis. Its function is as follows. Necessary for the introduction of cis unsaturation into fatty acids. Catalyzes the dehydration of (3R)-3-hydroxydecanoyl-ACP to E-(2)-decenoyl-ACP and then its isomerization to Z-(3)-decenoyl-ACP. Can catalyze the dehydratase reaction for beta-hydroxyacyl-ACPs with saturated chain lengths up to 16:0, being most active on intermediate chain length. The sequence is that of 3-hydroxydecanoyl-[acyl-carrier-protein] dehydratase from Brucella ovis (strain ATCC 25840 / 63/290 / NCTC 10512).